A 355-amino-acid polypeptide reads, in one-letter code: 6-aminohexanoate-oligomer endohydrolase (355 aa).

T267 functions as the Nucleophile in the catalytic mechanism.

The protein belongs to the peptidase S58 family. In terms of assembly, heterotetramer composed of 4 alpha/beta heterodimers. In terms of processing, expressed as an inactive precursor that is cleaved autocatalytically at Asn266/Thr267 to generate an active enzyme composed of an alpha subunit and a beta subunit.

The catalysed reaction is [N-(6-aminohexanoyl)]n + H2O = [N-(6-aminohexanoyl)]n-x + [N-(6-aminohexanoyl)]x.. The protein operates within xenobiotic degradation; nylon-6 oligomer degradation. Involved in the degradation of nylon-6 oligomers. Degrades cyclic and linear oligomers of 6-aminohexanoate (Ahx) with a degree of polymerization greater than three by an endo-type mode. Cannot use Ahx cyclic dimer or the Ahx linear dimer. The sequence is that of 6-aminohexanoate-oligomer endohydrolase from Agromyces sp. (strain KY5R).